The chain runs to 443 residues: Tol-Pal system protein TolB (443 aa).

Positions 1-31 (MMIMTTRTFFSWFIVICAFWLTSFSSVPVHA) are cleaved as a signal peptide. Residues 422–443 (ERQLPTPNDASDPAWSPLLNIQ) are disordered.

This sequence belongs to the TolB family. The Tol-Pal system is composed of five core proteins: the inner membrane proteins TolA, TolQ and TolR, the periplasmic protein TolB and the outer membrane protein Pal. They form a network linking the inner and outer membranes and the peptidoglycan layer.

It localises to the periplasm. Functionally, part of the Tol-Pal system, which plays a role in outer membrane invagination during cell division and is important for maintaining outer membrane integrity. This is Tol-Pal system protein TolB from Bartonella henselae (strain ATCC 49882 / DSM 28221 / CCUG 30454 / Houston 1) (Rochalimaea henselae).